Consider the following 354-residue polypeptide: UDP-3-O-acylglucosamine N-acyltransferase (354 aa).

The Proton acceptor role is filled by histidine 245.

Belongs to the transferase hexapeptide repeat family. LpxD subfamily. As to quaternary structure, homotrimer.

It carries out the reaction a UDP-3-O-[(3R)-3-hydroxyacyl]-alpha-D-glucosamine + a (3R)-hydroxyacyl-[ACP] = a UDP-2-N,3-O-bis[(3R)-3-hydroxyacyl]-alpha-D-glucosamine + holo-[ACP] + H(+). It participates in bacterial outer membrane biogenesis; LPS lipid A biosynthesis. In terms of biological role, catalyzes the N-acylation of UDP-3-O-acylglucosamine using 3-hydroxyacyl-ACP as the acyl donor. Is involved in the biosynthesis of lipid A, a phosphorylated glycolipid that anchors the lipopolysaccharide to the outer membrane of the cell. The sequence is that of UDP-3-O-acylglucosamine N-acyltransferase from Anaeromyxobacter dehalogenans (strain 2CP-1 / ATCC BAA-258).